A 347-amino-acid chain; its full sequence is FK506-binding protein-like (347 aa).

The segment at 1-24 is disordered; that stretch reads METSPISPMNEKNTAQPQQREENA. The residue at position 3 (Thr-3) is a Phosphothreonine. TPR repeat units lie at residues 208–241, 250–283, and 284–317; these read AKEE…LLTL, TTLY…EPGH, and LKAL…DPKN.

Forms a ternary complex with CDKN1A/p21 and HSP90AB1/Hsp90.

In terms of biological role, may be involved in response to X-ray. Regulates p21 protein stability by binding to Hsp90 and p21. This is FK506-binding protein-like (Fkbpl) from Mus musculus (Mouse).